The chain runs to 173 residues: NADH-ubiquinone oxidoreductase chain 6 (173 aa).

The next 5 helical transmembrane spans lie at 1-21 (MTYF…AVAS), 25-45 (PYFA…VLVG), 53-73 (LVLF…SAAL), 87-107 (VLGY…FFWG), and 141-161 (GGML…VLEL).

This sequence belongs to the complex I subunit 6 family.

It localises to the mitochondrion membrane. The enzyme catalyses a ubiquinone + NADH + 5 H(+)(in) = a ubiquinol + NAD(+) + 4 H(+)(out). Functionally, core subunit of the mitochondrial membrane respiratory chain NADH dehydrogenase (Complex I) that is believed to belong to the minimal assembly required for catalysis. Complex I functions in the transfer of electrons from NADH to the respiratory chain. The immediate electron acceptor for the enzyme is believed to be ubiquinone. This Carassius auratus (Goldfish) protein is NADH-ubiquinone oxidoreductase chain 6 (MT-ND6).